Consider the following 304-residue polypeptide: GTPase Era (304 aa).

In terms of domain architecture, Era-type G spans 9 to 177 (HSGFVAIVGR…VTTLSQHMPE (169 aa)). The G1 stretch occupies residues 17-24 (GRPNVGKS). Residue 17 to 24 (GRPNVGKS) participates in GTP binding. Residues 43 to 47 (QTTRN) form a G2 region. Residues 64–67 (DTPG) form a G3 region. Residues 64–68 (DTPGI) and 127–130 (NKID) each bind GTP. The segment at 127–130 (NKID) is G4. The tract at residues 156 to 158 (ISA) is G5. Residues 208-285 (TRQEVPHSVA…YLELWVKVSE (78 aa)) form the KH type-2 domain.

The protein belongs to the TRAFAC class TrmE-Era-EngA-EngB-Septin-like GTPase superfamily. Era GTPase family. Monomer.

It is found in the cytoplasm. The protein localises to the cell membrane. Its function is as follows. An essential GTPase that binds both GDP and GTP, with rapid nucleotide exchange. Plays a role in 16S rRNA processing and 30S ribosomal subunit biogenesis and possibly also in cell cycle regulation and energy metabolism. The polypeptide is GTPase Era (Pediococcus pentosaceus (strain ATCC 25745 / CCUG 21536 / LMG 10740 / 183-1w)).